A 209-amino-acid polypeptide reads, in one-letter code: uncharacterized protein (209 aa).

In terms of biological role, may influence the expression of the nuc gene. This is an uncharacterized protein from Shigella flexneri.